Here is a 195-residue protein sequence, read N- to C-terminus: UMP-CMP kinase (195 aa).

Residue 17–22 (GSGKGT) coordinates ATP. The NMP stretch occupies residues 37–66 (SAGDLLRQEQQSGSKDGEMIATMIKNGEIV). A ribonucleoside 5'-phosphate is bound by residues Arg43, 64 to 66 (EIV), and 91 to 94 (GFPR). Asn98 provides a ligand contact to CMP. The segment at 131–141 (KRGESSGRSDD) is LID. Arg132 contributes to the ATP binding site. Arg138 and Arg149 together coordinate a ribonucleoside 5'-phosphate. Residue Arg177 participates in ATP binding.

This sequence belongs to the adenylate kinase family. UMP-CMP kinase subfamily. As to quaternary structure, monomer. Mg(2+) serves as cofactor.

The protein localises to the cytoplasm. The protein resides in the nucleus. It catalyses the reaction CMP + ATP = CDP + ADP. The enzyme catalyses dCMP + ATP = dCDP + ADP. The catalysed reaction is UMP + ATP = UDP + ADP. Its function is as follows. Catalyzes the phosphorylation of pyrimidine nucleoside monophosphates at the expense of ATP. Plays an important role in de novo pyrimidine nucleotide biosynthesis. Has preference for UMP and CMP as phosphate acceptors. The protein is UMP-CMP kinase of Dictyostelium discoideum (Social amoeba).